The following is a 369-amino-acid chain: DNA polymerase IV 2 (369 aa).

The region spanning 17 to 201 is the UmuC domain; sequence VFHVDMDSFF…LPVSRIPGVG (185 aa). Residues Asp-21 and Asp-119 each contribute to the Mg(2+) site. Glu-120 is an active-site residue.

Belongs to the DNA polymerase type-Y family. In terms of assembly, monomer. Requires Mg(2+) as cofactor.

It is found in the cytoplasm. It carries out the reaction DNA(n) + a 2'-deoxyribonucleoside 5'-triphosphate = DNA(n+1) + diphosphate. Functionally, poorly processive, error-prone DNA polymerase involved in untargeted mutagenesis. Copies undamaged DNA at stalled replication forks, which arise in vivo from mismatched or misaligned primer ends. These misaligned primers can be extended by PolIV. Exhibits no 3'-5' exonuclease (proofreading) activity. May be involved in translesional synthesis. The polypeptide is DNA polymerase IV 2 (dbh2) (Methanosarcina mazei (strain ATCC BAA-159 / DSM 3647 / Goe1 / Go1 / JCM 11833 / OCM 88) (Methanosarcina frisia)).